Reading from the N-terminus, the 144-residue chain is 3-dehydroquinate dehydratase (144 aa).

Catalysis depends on Y22, which acts as the Proton acceptor. Substrate is bound by residues N73, H79, and D86. Residue H99 is the Proton donor of the active site. Substrate contacts are provided by residues 100 to 101 (IS) and R110.

It belongs to the type-II 3-dehydroquinase family. Homododecamer.

It carries out the reaction 3-dehydroquinate = 3-dehydroshikimate + H2O. It participates in metabolic intermediate biosynthesis; chorismate biosynthesis; chorismate from D-erythrose 4-phosphate and phosphoenolpyruvate: step 3/7. Catalyzes a trans-dehydration via an enolate intermediate. The protein is 3-dehydroquinate dehydratase of Mycobacteroides abscessus (strain ATCC 19977 / DSM 44196 / CCUG 20993 / CIP 104536 / JCM 13569 / NCTC 13031 / TMC 1543 / L948) (Mycobacterium abscessus).